A 549-amino-acid polypeptide reads, in one-letter code: MDEDSKPLLGSVPTGDYYTDSLDPKQRRPFHVEPRNIVGEDVQERVSAEAAVLSSRVHYYSRLTGSSDRLLAPPDHVIPSHEDIYIYSPLGTAFKVQGGDSPIKNPSIVTIFAIWNTMMGTSILSIPWGIKQAGFTLGIIIIVLMGLLTLYCCYRVLKSTKSIPYVDTSDWEFPDVCKYYFGGFGKWSSLVFSLVSLIGAMVVYWVLMSNFLFNTGKFIFNYVHNVNTSDAFGTNGTERVICPYPDVDPHGNSSTSLYSGSDNSTGLEFDHWWSKTNTIPFYLILLLLPLLNFRSASFFARFTFLGTISVIYLIFLVTYKAIQLGFHLEFHWFDSSMFFVPEFRTLFPQLSGVLTLAFFIHNCIITLMKNNKHQENNVRDLSLAYLLVGLTYLYVGVLIFAAFPSPPLSKECIEPNFLDNFPSSDILVFVARTFLLFQMTTVYPLLGYLVRVQLMGQIFGNHYPGFLHVFVLNVFVVGAGVLMARFYPNIGSIIRYSGALCGLALVFVLPSLIHMVSLKRRGELRWTSTLFHGFLILLGVANLLGQFFM.

The disordered stretch occupies residues 1–27 (MDEDSKPLLGSVPTGDYYTDSLDPKQR). Over 1 to 107 (MDEDSKPLLG…GGDSPIKNPS (107 aa)) the chain is Cytoplasmic. The helical transmembrane segment at 108-128 (IVTIFAIWNTMMGTSILSIPW) threads the bilayer. The important for arginine binding and amino acid transport stretch occupies residues 117 to 122 (TMMGTS). Arginine is bound at residue S122. Topologically, residues 129 to 134 (GIKQAG) are lumenal. The chain crosses the membrane as a helical span at residues 135–155 (FTLGIIIIVLMGLLTLYCCYR). Residues 156 to 186 (VLKSTKSIPYVDTSDWEFPDVCKYYFGGFGK) are Cytoplasmic-facing. A helical membrane pass occupies residues 187–213 (WSSLVFSLVSLIGAMVVYWVLMSNFLF). Topologically, residues 214-271 (NTGKFIFNYVHNVNTSDAFGTNGTERVICPYPDVDPHGNSSTSLYSGSDNSTGLEFDH) are lumenal. Residues N227, N235, N252, and N263 are each glycosylated (N-linked (GlcNAc...) asparagine). A disulfide bridge connects residues C242 and C412. The chain crosses the membrane as a helical span at residues 272–288 (WWSKTNTIPFYLILLLL). Residues 289 to 297 (PLLNFRSAS) are Cytoplasmic-facing. Residues 298–322 (FFARFTFLGTISVIYLIFLVTYKAI) form a helical membrane-spanning segment. Topologically, residues 323 to 344 (QLGFHLEFHWFDSSMFFVPEFR) are lumenal. A helical transmembrane segment spans residues 345 to 365 (TLFPQLSGVLTLAFFIHNCII). Topologically, residues 366–382 (TLMKNNKHQENNVRDLS) are cytoplasmic. Residues 383 to 403 (LAYLLVGLTYLYVGVLIFAAF) form a helical membrane-spanning segment. Over 404–425 (PSPPLSKECIEPNFLDNFPSSD) the chain is Lumenal. Residues 426–446 (ILVFVARTFLLFQMTTVYPLL) form a helical membrane-spanning segment. The short motif at 432 to 442 (RTFLLFQMTTV) is the CARC motif element. The CRAC motif signature appears at 445–451 (LLGYLVR). Residues 447–467 (GYLVRVQLMGQIFGNHYPGFL) lie on the Cytoplasmic side of the membrane. Residues 468-488 (HVFVLNVFVVGAGVLMARFYP) traverse the membrane as a helical segment. Over 489 to 495 (NIGSIIR) the chain is Lumenal. Residues 496 to 516 (YSGALCGLALVFVLPSLIHMV) form a helical membrane-spanning segment. Residues 517–528 (SLKRRGELRWTS) are Cytoplasmic-facing. Residues 529–549 (TLFHGFLILLGVANLLGQFFM) form a helical membrane-spanning segment.

Belongs to the amino acid/polyamine transporter 2 family. SLC38A9 subfamily. Associated component of the Ragulator complex. Associated component of the Rag GTPases heterodimers (RRAGA and RRAGC). In terms of processing, glycosylated.

The protein resides in the lysosome membrane. It is found in the late endosome membrane. The enzyme catalyses L-leucine(in) = L-leucine(out). It catalyses the reaction L-tyrosine(in) = L-tyrosine(out). The catalysed reaction is L-glutamine(out) = L-glutamine(in). It carries out the reaction L-asparagine(out) = L-asparagine(in). Its activity is regulated as follows. Amino acid transport activity is increased by sodium. Transport of L-glutamine, leucine and tyrosine is increased by arginine binding. In terms of biological role, lysosomal amino acid transporter involved in the activation of mTORC1 in response to amino acid levels. Probably acts as an amino acid sensor of the Rag GTPases and Ragulator complexes, 2 complexes involved in amino acid sensing and activation of mTORC1, a signaling complex promoting cell growth in response to growth factors, energy levels, and amino acids. Following activation by amino acids, the Ragulator and Rag GTPases function as a scaffold recruiting mTORC1 to lysosomes where it is in turn activated. SLC38A9 mediates transport of amino acids with low capacity and specificity with a slight preference for polar amino acids. Acts as an arginine sensor. Following activation by arginine binding, mediates transport of L-glutamine, leucine and tyrosine with high efficiency, and is required for the efficient utilization of these amino acids after lysosomal protein degradation. However, the transport mechanism is not well defined and the role of sodium is not clear. Guanine exchange factor (GEF) that, upon arginine binding, stimulates GDP release from RRAGA and therefore activates the Rag GTPase heterodimer and the mTORC1 pathway in response to nutrient sufficiency. This Danio rerio (Zebrafish) protein is Neutral amino acid transporter 9.